The primary structure comprises 90 residues: Acylphosphatase (90 aa).

Positions C4–Y90 constitute an Acylphosphatase-like domain. Catalysis depends on residues R19 and N37.

This sequence belongs to the acylphosphatase family.

The catalysed reaction is an acyl phosphate + H2O = a carboxylate + phosphate + H(+). The sequence is that of Acylphosphatase (acyP) from Methanothrix thermoacetophila (strain DSM 6194 / JCM 14653 / NBRC 101360 / PT) (Methanosaeta thermophila).